A 579-amino-acid chain; its full sequence is YTH domain-containing family protein 2 (579 aa).

Positions 1–45 are disordered; that stretch reads MSASSLLEQRPKGQGNKVQNGSVHQKDGLNDDDFEPYLSPQARPN. Residue serine 2 is modified to N-acetylserine. 6 positions are modified to phosphoserine: serine 2, serine 4, serine 5, serine 22, serine 39, and serine 196. Positions 2–384 are localization to mRNA processing bodies (P-bodies); the sequence is SASSLLEQRP…QAGSGSTPSE (383 aa). A disordered region spans residues 247-387; sequence AKQQPKLKTK…SGSTPSEPHP (141 aa). Positions 291-316 are enriched in polar residues; the sequence is ALVQNIGQPTQGSPQPVGQQANNSPP. Residues 337–349 are compositionally biased toward low complexity; sequence AQLSVQQQAAQPT. Residue serine 359 is modified to Phosphoserine. The span at 359–371 shows a compositional bias: gly residues; it reads SGFGHNGVDGNGV. A compositionally biased stretch (polar residues) spans 372–383; it reads GQSQAGSGSTPS. The tract at residues 385–579 is interaction with m6A-containing mRNAs; the sequence is PHPVLEKLRS…VKKERQGRGK (195 aa). Serine 394 is modified (phosphoserine). The region spanning 410-544 is the YTH domain; the sequence is GRVFIIKSYS…EKAKQVLKII (135 aa). RNA contacts are provided by residues 416 to 418, aspartate 422, 432 to 433, asparagine 462, tryptophan 486, and tryptophan 491; these read KSY and WC.

It belongs to the YTHDF family. YTHDF2 subfamily. In terms of assembly, interacts with CNOT1; interaction is direct and promotes recruitment of the CCR4-NOT complex. Interacts with YTHDF3. Interacts with RIDA/HRSP12; interaction leads to recruitment of the ribonuclease P/MRP complex. Ubiquitinated by the SCF(SKP2) complex, leading to its degradation. In terms of tissue distribution, highly expressed in induced pluripotent stem cells (iPSCs) and down-regulated during neural differentiation.

The protein localises to the cytoplasm. It localises to the cytosol. It is found in the P-body. Its subcellular location is the stress granule. The protein resides in the nucleus. Specifically recognizes and binds N6-methyladenosine (m6A)-containing RNAs, and regulates their stability. M6A is a modification present at internal sites of mRNAs and some non-coding RNAs and plays a role in mRNA stability and processing. Acts as a regulator of mRNA stability by promoting degradation of m6A-containing mRNAs via interaction with the CCR4-NOT and ribonuclease P/MRP complexes, depending on the context. The YTHDF paralogs (YTHDF1, YTHDF2 and YTHDF3) share m6A-containing mRNAs targets and act redundantly to mediate mRNA degradation and cellular differentiation. M6A-containing mRNAs containing a binding site for RIDA/HRSP12 (5'-GGUUC-3') are preferentially degraded by endoribonucleolytic cleavage: cooperative binding of RIDA/HRSP12 and YTHDF2 to transcripts leads to recruitment of the ribonuclease P/MRP complex. Other m6A-containing mRNAs undergo deadenylation via direct interaction between YTHDF2 and CNOT1, leading to recruitment of the CCR4-NOT and subsequent deadenylation of m6A-containing mRNAs. Required maternally to regulate oocyte maturation: probably acts by binding to m6A-containing mRNAs, thereby regulating maternal transcript dosage during oocyte maturation, which is essential for the competence of oocytes to sustain early zygotic development. Also required during spermatogenesis: regulates spermagonial adhesion by promoting degradation of m6A-containing transcripts coding for matrix metallopeptidases. Also involved in hematopoietic stem cells specification by binding to m6A-containing mRNAs, leading to promote their degradation. Also acts as a regulator of neural development by promoting m6A-dependent degradation of neural development-related mRNA targets. Inhibits neural specification of induced pluripotent stem cells by binding to methylated neural-specific mRNAs and promoting their degradation, thereby restraining neural differentiation. Regulates circadian regulation of hepatic lipid metabolism: acts by promoting m6A-dependent degradation of PPARA transcripts. Regulates the innate immune response to infection by inhibiting the type I interferon response: acts by binding to m6A-containing IFNB transcripts and promoting their degradation. May also act as a promoter of cap-independent mRNA translation following heat shock stress: upon stress, relocalizes to the nucleus and specifically binds mRNAs with some m6A methylation mark at their 5'-UTR, protecting demethylation of mRNAs by FTO, thereby promoting cap-independent mRNA translation. Regulates mitotic entry by promoting the phase-specific m6A-dependent degradation of WEE1 transcripts. Promotes formation of phase-separated membraneless compartments, such as P-bodies or stress granules, by undergoing liquid-liquid phase separation upon binding to mRNAs containing multiple m6A-modified residues: polymethylated mRNAs act as a multivalent scaffold for the binding of YTHDF proteins, juxtaposing their disordered regions and thereby leading to phase separation. The resulting mRNA-YTHDF complexes then partition into different endogenous phase-separated membraneless compartments, such as P-bodies, stress granules or neuronal RNA granules. May also recognize and bind RNAs modified by C5-methylcytosine (m5C) and act as a regulator of rRNA processing. Its function is as follows. (Microbial infection) Promotes viral gene expression and replication of polyomavirus SV40: acts by binding to N6-methyladenosine (m6A)-containing viral RNAs. In terms of biological role, (Microbial infection) Promotes viral gene expression and virion production of kaposis sarcoma-associated herpesvirus (KSHV) at some stage of the KSHV life cycle (in iSLK.219 and iSLK.BAC16 cells). Acts by binding to N6-methyladenosine (m6A)-containing viral RNAs. In Homo sapiens (Human), this protein is YTH domain-containing family protein 2.